The primary structure comprises 706 residues: Melanopsin (706 aa).

The Extracellular portion of the chain corresponds to 1–86 (MTEIPSFQPP…VWDIPPLAHY (86 aa)). Residues Asn12, Asn64, and Asn69 are each glycosylated (N-linked (GlcNAc...) asparagine). The helical transmembrane segment at 87–107 (IVGTAVFCIGCCGMFGNAVVV) threads the bilayer. Over 108–121 (YSFIKSKGLRTPAN) the chain is Cytoplasmic. Residues 122 to 142 (FFIINLALSDFLMNLTNMPIF) traverse the membrane as a helical segment. Over 143 to 159 (AVNSAFQRWLLSDFACE) the chain is Extracellular. Cys158 and Cys236 are disulfide-bonded. Residues 160 to 180 (LYGFAGGLFGCLSINTLMAIS) form a helical membrane-spanning segment. Residues 181–201 (MDRYLVITKPFLVMRIVTKQR) are Cytoplasmic-facing. A helical transmembrane segment spans residues 202–222 (VMFAILLLWIWSLVWALPPLF). Topologically, residues 223 to 248 (GWSAYVSEGFGTSCTFDYMTPKLSYH) are extracellular. A helical membrane pass occupies residues 249–269 (IFTYIIFFTMYFIPGGVMIYC). At 270–314 (YYNIFATVKSGDKQFGKAVKEMAHEDVKNKAQQERQRKNEIKTAK) the chain is on the cytoplasmic side. The chain crosses the membrane as a helical span at residues 315 to 335 (IAFIVISLFMSAWTPYAVVSA). The Extracellular segment spans residues 336-351 (LGTLGYQDLVTPYLQS). The chain crosses the membrane as a helical span at residues 352 to 372 (IPAMFAKSSAVYSPIVYAITY). N6-(retinylidene)lysine is present on Lys358. At 373–706 (PKFREAVKKH…LSEAHDETVL (334 aa)) the chain is on the cytoplasmic side. Disordered regions lie at residues 393–446 (SEEE…RQDT), 571–599 (RTES…SFNT), and 630–658 (QSSE…NETE). 2 stretches are compositionally biased toward low complexity: residues 404–418 (QSSA…QTTA) and 426–442 (SVDS…SGVS). The span at 571-593 (RTESGYDRSQDSQRKKVVGDTHR) shows a compositional bias: basic and acidic residues. Residues 645–658 (GITEVDTDSENETE) are compositionally biased toward acidic residues.

The protein belongs to the G-protein coupled receptor 1 family. Opsin subfamily. Expressed in Joseph cells and photoreceptor cells of the dorsal ocelli.

It is found in the cell membrane. Functionally, photoreceptor implicated in non-image-forming responses to light. Photoisomerizes covalently bound all-trans retinal back to 11-cis retinal. Most likely coupled to the G(q) signaling cascade. The protein is Melanopsin of Branchiostoma belcheri (Amphioxus).